Consider the following 1505-residue polypeptide: Anaphase-promoting complex subunit 1 (1505 aa).

The protein belongs to the APC1 family. In terms of assembly, the APC/C complex is probably composed of at least 12 subunits: apc-2, apc-10, apc-11, cdc-26, emb-1, emb-27, emb-30, mat-1, mat-2, mat-3, such-1 and gfi-3.

The protein operates within protein modification; protein ubiquitination. In terms of biological role, probable component of the anaphase promoting complex/cyclosome (APC/C), a cell cycle-regulated E3 ubiquitin ligase that controls progression through mitosis and the G1 phase of the cell cycle. The APC/C complex acts by mediating ubiquitination and subsequent degradation of target proteins. Developmental role in early embryogenesis and the metaphase to anaphase transition in oocyte and spermatocyte meiosis and mitosis in germ cells. Required for embryonic anterior-posterior axis formation. Plays a role in regulating the abundance of glr-1 receptors in postmitotic neurons, which may in turn control animal locomotion. Involved in regulating GABA neurotransmitter release at neuromuscular junctions in GABA motor neurons. This is Anaphase-promoting complex subunit 1 from Caenorhabditis elegans.